We begin with the raw amino-acid sequence, 478 residues long: 5-hydroxytryptamine receptor 3A (478 aa).

An N-terminal signal peptide occupies residues 1–23 (MLLWVQQALLALLLPTLLAQGEA). Residues 24 to 241 (RRSRNTTRPA…MKFYVVIRRR (218 aa)) are Extracellular-facing. Asparagine 28, asparagine 104, asparagine 170, and asparagine 186 each carry an N-linked (GlcNAc...) asparagine glycan. Cysteine 157 and cysteine 171 form a disulfide bridge. Residues 242–268 (PLFYVVSLLLPSIFLMVMDIVGFYLPP) form a helical membrane-spanning segment. Residues 269 to 273 (NSGER) are Cytoplasmic-facing. Residues 274–292 (VSFKITLLLGYSVFLIIVS) traverse the membrane as a helical segment. Residues 293–302 (DTLPATAIGT) are Extracellular-facing. The chain crosses the membrane as a helical span at residues 303–321 (PLIGVYFVVCMALLVISLA). At 322 to 455 (ETIFIVRLVH…GSVLDKLLFH (134 aa)) the chain is on the cytoplasmic side. Residues 389-408 (GGPQDFEKSPRDRCSPPPPP) form a disordered region. Residues 393–402 (DFEKSPRDRC) are compositionally biased toward basic and acidic residues. The HA-stretch; determines single-channel conductance in 5-HT3 receptors stretch occupies residues 414–450 (AVCGLLQELSSIRQFLEKRDEIREVARDWLRVGSVLD). A helical transmembrane segment spans residues 456–475 (IYLLAVLAYSITLVMLWSIW). The Extracellular portion of the chain corresponds to 476–478 (QYA).

Belongs to the ligand-gated ion channel (TC 1.A.9) family. 5-hydroxytryptamine receptor (TC 1.A.9.2) subfamily. HTR3A sub-subfamily. Forms homopentameric as well as heteropentameric serotonin-activated cation-selective channel complexes with HTR3B or HTR3C or HTR3D or HTR3E. The homomeric complex is functional but exhibits low conductance with modified voltage dependence, and decreased agonist and antagonist affinity. Heteropentameric complexes display properties which resemble that of neuronal serotonin-activated channels in vivo. Interacts with RIC3. As to expression, expressed in cerebral cortex, amygdala, hippocampus, and testis. Detected in monocytes of the spleen and tonsil, in small and large intestine, uterus, prostate, ovary and placenta.

Its subcellular location is the postsynaptic cell membrane. It localises to the cell membrane. The catalysed reaction is Na(+)(in) = Na(+)(out). It carries out the reaction K(+)(in) = K(+)(out). It catalyses the reaction Ca(2+)(in) = Ca(2+)(out). The enzyme catalyses Mg(2+)(in) = Mg(2+)(out). Forms serotonin (5-hydroxytryptamine/5-HT3)-activated cation-selective channel complexes, which when activated cause fast, depolarizing responses in neurons. The protein is 5-hydroxytryptamine receptor 3A of Homo sapiens (Human).